A 248-amino-acid chain; its full sequence is uncharacterized protein (248 aa).

Residues 1-23 form the signal peptide; it reads MLKKIVIGVTATAAFGIGAGALA.

The protein localises to the cell outer membrane. This is an uncharacterized protein from Coxiella burnetii (strain RSA 493 / Nine Mile phase I).